A 247-amino-acid polypeptide reads, in one-letter code: Putative trypsin-6 (247 aa).

The signal sequence occupies residues 1 to 15; that stretch reads MNPLLILAFVGAAVA. Residues 24–244 form the Peptidase S1 domain; that stretch reads IVGGYTCEEN…YVDWIKDTIA (221 aa). A disulfide bridge links Cys48 with Cys64. The active-site Charge relay system is His63. Residues Glu75, Asn77, Val80, and Glu85 each coordinate Ca(2+). Asp107 serves as the catalytic Charge relay system. 3 disulfide bridges follow: Cys139–Cys206, Cys171–Cys185, and Cys196–Cys220. Residue Ser200 is the Charge relay system of the active site.

The protein belongs to the peptidase S1 family. Tryptase subfamily. Overexpressed in metastasing in non small cell lung tumors, leading to an enhanced cell migration.

The protein resides in the secreted. The catalysed reaction is Preferential cleavage: Arg-|-Xaa, Lys-|-Xaa.. In terms of biological role, may regulate cell migration. This Homo sapiens (Human) protein is Putative trypsin-6 (PRSS3P2).